The primary structure comprises 333 residues: Ribosomal RNA small subunit methyltransferase C (333 aa).

This sequence belongs to the methyltransferase superfamily. RsmC family. In terms of assembly, monomer.

The protein resides in the cytoplasm. The catalysed reaction is guanosine(1207) in 16S rRNA + S-adenosyl-L-methionine = N(2)-methylguanosine(1207) in 16S rRNA + S-adenosyl-L-homocysteine + H(+). Its function is as follows. Specifically methylates the guanine in position 1207 of 16S rRNA in the 30S particle. This is Ribosomal RNA small subunit methyltransferase C from Actinobacillus succinogenes (strain ATCC 55618 / DSM 22257 / CCUG 43843 / 130Z).